The sequence spans 422 residues: Putative serpin-Z8 (422 aa).

The interval 369–393 is RCL; it reads GTVAAAATMTRMLPSGVPPPPVDFV.

The protein belongs to the serpin family.

Probable serine protease inhibitor. The polypeptide is Putative serpin-Z8 (Oryza sativa subsp. japonica (Rice)).